A 231-amino-acid polypeptide reads, in one-letter code: Probable transaldolase (231 aa).

Residue Lys-83 is the Schiff-base intermediate with substrate of the active site.

The protein belongs to the transaldolase family. Type 3B subfamily.

The protein localises to the cytoplasm. It carries out the reaction D-sedoheptulose 7-phosphate + D-glyceraldehyde 3-phosphate = D-erythrose 4-phosphate + beta-D-fructose 6-phosphate. It participates in carbohydrate degradation; pentose phosphate pathway; D-glyceraldehyde 3-phosphate and beta-D-fructose 6-phosphate from D-ribose 5-phosphate and D-xylulose 5-phosphate (non-oxidative stage): step 2/3. Its function is as follows. Transaldolase is important for the balance of metabolites in the pentose-phosphate pathway. The sequence is that of Probable transaldolase from Rhodospirillum centenum (strain ATCC 51521 / SW).